Consider the following 264-residue polypeptide: Thymidylate synthase (264 aa).

Residue R21 coordinates dUMP. Residue H51 participates in (6R)-5,10-methylene-5,6,7,8-tetrahydrofolate binding. R126–R127 serves as a coordination point for dUMP. The active-site Nucleophile is the C146. DUMP contacts are provided by residues R166–D169, N177, and H207–Y209. (6R)-5,10-methylene-5,6,7,8-tetrahydrofolate is bound at residue D169. A263 provides a ligand contact to (6R)-5,10-methylene-5,6,7,8-tetrahydrofolate.

This sequence belongs to the thymidylate synthase family. Bacterial-type ThyA subfamily. As to quaternary structure, homodimer.

The protein resides in the cytoplasm. It catalyses the reaction dUMP + (6R)-5,10-methylene-5,6,7,8-tetrahydrofolate = 7,8-dihydrofolate + dTMP. The protein operates within pyrimidine metabolism; dTTP biosynthesis. Functionally, catalyzes the reductive methylation of 2'-deoxyuridine-5'-monophosphate (dUMP) to 2'-deoxythymidine-5'-monophosphate (dTMP) while utilizing 5,10-methylenetetrahydrofolate (mTHF) as the methyl donor and reductant in the reaction, yielding dihydrofolate (DHF) as a by-product. This enzymatic reaction provides an intracellular de novo source of dTMP, an essential precursor for DNA biosynthesis. The chain is Thymidylate synthase from Citrobacter koseri (strain ATCC BAA-895 / CDC 4225-83 / SGSC4696).